We begin with the raw amino-acid sequence, 228 residues long: Ribonuclease 3 (228 aa).

In terms of domain architecture, RNase III spans 5-127 (KDALQDRLGY…LFGAIYLDGG (123 aa)). E40 provides a ligand contact to Mg(2+). D44 is an active-site residue. The Mg(2+) site is built by D113 and E116. E116 is a catalytic residue. In terms of domain architecture, DRBM spans 154–224 (DPKTRLQEHL…AEQMLKRLED (71 aa)). The tract at residues 200–228 (AEGEAGSRRKAEQQAAEQMLKRLEDKHER) is disordered. Over residues 218–228 (MLKRLEDKHER) the composition is skewed to basic and acidic residues.

The protein belongs to the ribonuclease III family. As to quaternary structure, homodimer. Mg(2+) is required as a cofactor.

Its subcellular location is the cytoplasm. The catalysed reaction is Endonucleolytic cleavage to 5'-phosphomonoester.. Functionally, digests double-stranded RNA. Involved in the processing of primary rRNA transcript to yield the immediate precursors to the large and small rRNAs (23S and 16S). Processes some mRNAs, and tRNAs when they are encoded in the rRNA operon. Processes pre-crRNA and tracrRNA of type II CRISPR loci if present in the organism. The sequence is that of Ribonuclease 3 from Alkalilimnicola ehrlichii (strain ATCC BAA-1101 / DSM 17681 / MLHE-1).